The primary structure comprises 697 residues: Polyribonucleotide nucleotidyltransferase (697 aa).

Asp-487 and Asp-493 together coordinate Mg(2+). Positions 554-613 (PRIETIQIKPSKIAVVIGPGGKQIRAIIEQTGVQIDIDDTGLVNIAAIDLVSIEKAKAII) constitute a KH domain. In terms of domain architecture, S1 motif spans 623-691 (GRIYSGKAIS…ERGQIKLSRK (69 aa)).

The protein belongs to the polyribonucleotide nucleotidyltransferase family. Mg(2+) serves as cofactor.

The protein resides in the cytoplasm. It catalyses the reaction RNA(n+1) + phosphate = RNA(n) + a ribonucleoside 5'-diphosphate. Its function is as follows. Involved in mRNA degradation. Catalyzes the phosphorolysis of single-stranded polyribonucleotides processively in the 3'- to 5'-direction. This Protochlamydia amoebophila (strain UWE25) protein is Polyribonucleotide nucleotidyltransferase.